A 402-amino-acid chain; its full sequence is Beta sliding clamp (402 aa).

It belongs to the beta sliding clamp family. As to quaternary structure, forms a ring-shaped head-to-tail homodimer around DNA which binds and tethers DNA polymerases and other proteins to the DNA. The DNA replisome complex has a single clamp-loading complex (3 tau and 1 each of delta, delta', psi and chi subunits) which binds 3 Pol III cores (1 core on the leading strand and 2 on the lagging strand) each with a beta sliding clamp dimer. Additional proteins in the replisome are other copies of gamma, psi and chi, Ssb, DNA helicase and RNA primase.

It localises to the cytoplasm. Its function is as follows. Confers DNA tethering and processivity to DNA polymerases and other proteins. Acts as a clamp, forming a ring around DNA (a reaction catalyzed by the clamp-loading complex) which diffuses in an ATP-independent manner freely and bidirectionally along dsDNA. Initially characterized for its ability to contact the catalytic subunit of DNA polymerase III (Pol III), a complex, multichain enzyme responsible for most of the replicative synthesis in bacteria; Pol III exhibits 3'-5' exonuclease proofreading activity. The beta chain is required for initiation of replication as well as for processivity of DNA replication. This is Beta sliding clamp (dnaN) from Mycobacterium bovis (strain ATCC BAA-935 / AF2122/97).